A 276-amino-acid polypeptide reads, in one-letter code: NH(3)-dependent NAD(+) synthetase (276 aa).

ATP is bound at residue Gly-43–Ser-50. Asp-49 contributes to the Mg(2+) binding site. Arg-146 contacts deamido-NAD(+). Residue Thr-166 coordinates ATP. Glu-171 contributes to the Mg(2+) binding site. Positions 179 and 186 each coordinate deamido-NAD(+). ATP is bound by residues Lys-195 and Thr-217. Deamido-NAD(+) is bound at residue His-266–Lys-267.

Belongs to the NAD synthetase family. Homodimer.

It carries out the reaction deamido-NAD(+) + NH4(+) + ATP = AMP + diphosphate + NAD(+) + H(+). It participates in cofactor biosynthesis; NAD(+) biosynthesis; NAD(+) from deamido-NAD(+) (ammonia route): step 1/1. Catalyzes the ATP-dependent amidation of deamido-NAD to form NAD. Uses ammonia as a nitrogen source. This is NH(3)-dependent NAD(+) synthetase from Vibrio atlanticus (strain LGP32) (Vibrio splendidus (strain Mel32)).